An 813-amino-acid chain; its full sequence is G-type lectin S-receptor-like serine/threonine-protein kinase LECRK1 (813 aa).

An N-terminal signal peptide occupies residues 1–19 (MVALLLFPMLLQLLSPTCA). Topologically, residues 20 to 466 (QTQKNITLGS…NRKHWVLGSS (447 aa)) are extracellular. Residues 22–149 (QKNITLGSTL…DGTTKWQTFD (128 aa)) enclose the Bulb-type lectin domain. Asn-24, Asn-57, Asn-164, Asn-168, Asn-219, and Asn-242 each carry an N-linked (GlcNAc...) asparagine glycan. One can recognise an EGF-like; atypical domain in the interval 293-346 (PQNICHAIVSDVGSGVCGFNSYCTFDGTRNQIASCQCPPWYKFFDEQKKYKGCK). 5 disulfide bridges follow: Cys-297–Cys-315, Cys-309–Cys-327, Cys-329–Cys-345, Cys-391–Cys-413, and Cys-395–Cys-401. Residues 354–433 (CDLEEATALA…NMADYVQRTV (80 aa)) enclose the PAN domain. 2 N-linked (GlcNAc...) asparagine glycosylation sites follow: Asn-407 and Asn-441. Residues 467 to 487 (LILGTSILVNFALISIFLFGT) form a helical membrane-spanning segment. Residues 488–813 (YCRITTKKNI…DPCSFISSLP (326 aa)) are Cytoplasmic-facing. In terms of domain architecture, Protein kinase spans 523-797 (AGFHEILGAG…KVTQMLDGAV (275 aa)). ATP contacts are provided by residues 529-537 (LGAGASGVV) and Lys-553. The active-site Proton acceptor is Asp-647.

It belongs to the protein kinase superfamily. Ser/Thr protein kinase family. In terms of assembly, interacts (via kinase domain) with ADF4. Expressed in plumules, radicles and panicles.

It localises to the membrane. It catalyses the reaction L-seryl-[protein] + ATP = O-phospho-L-seryl-[protein] + ADP + H(+). The enzyme catalyses L-threonyl-[protein] + ATP = O-phospho-L-threonyl-[protein] + ADP + H(+). Functionally, involved in innate immunity. Required for the expression of defense-related genes PR1A, LOX2 and CHS1 upon biotic stresses. Required for basal resistance to the fungal blast (M.grisea), bacterial blight (O.oryzae pv. oryzae, Xoo) and the herbivorous insect brown planthopper (N.lugens, BPH). May be involved in several defense signaling pathways. Involved in the promotion of seed germination. Required for the expression of alpha-amylase genes during seed germination. Involved in resistance against the brown planthopper (BPH). Member of the BPH3 (BPH resistance locus 3) cluster which contains LECRK1, LECRK2 and LECRK3. This chain is G-type lectin S-receptor-like serine/threonine-protein kinase LECRK1, found in Oryza sativa subsp. indica (Rice).